Here is a 204-residue protein sequence, read N- to C-terminus: 3-isopropylmalate dehydratase small subunit (204 aa).

This sequence belongs to the LeuD family. LeuD type 1 subfamily. In terms of assembly, heterodimer of LeuC and LeuD.

The catalysed reaction is (2R,3S)-3-isopropylmalate = (2S)-2-isopropylmalate. It functions in the pathway amino-acid biosynthesis; L-leucine biosynthesis; L-leucine from 3-methyl-2-oxobutanoate: step 2/4. In terms of biological role, catalyzes the isomerization between 2-isopropylmalate and 3-isopropylmalate, via the formation of 2-isopropylmaleate. The protein is 3-isopropylmalate dehydratase small subunit of Vesicomyosocius okutanii subsp. Calyptogena okutanii (strain HA).